Here is a 453-residue protein sequence, read N- to C-terminus: Pentatricopeptide repeat-containing protein At2g38420, mitochondrial (453 aa).

The N-terminal 77 residues, 1-77, are a transit peptide targeting the mitochondrion; the sequence is MARSSSWHRM…CEPTPQAYRF (77 aa). PPR repeat units lie at residues 107–141, 142–177, 178–212, 213–249, 250–284, 285–319, 320–354, 355–389, and 390–424; these read PESIFRDVIAAYGFSGRIEEAIEVFFKIPNFRCVP, SAYTLNALLLVLVRKRQSLELVPEILVKACRMGVRL, EESTFGILIDALCRIGEVDCATELVRYMSQDSVIV, DPRLYSRLLSSVCKHKDSSCFDVIGYLEDLRKTRFSP, GLRDYTVVMRFLVEGGRGKEVVSVLNQMKCDRVEP, DLVCYTIVLQGVIADEDYPKADKLFDELLLLGLAP, DVYTYNVYINGLCKQNDIEGALKMMSSMNKLGSEP, NVVTYNILIKALVKAGDLSRAKTLWKEMETNGVNR, and NSHTFDIMISAYIEVDEVVCAHGLLEEAFNMNVFV.

Belongs to the PPR family. P subfamily.

Its subcellular location is the mitochondrion. The protein is Pentatricopeptide repeat-containing protein At2g38420, mitochondrial of Arabidopsis thaliana (Mouse-ear cress).